The primary structure comprises 184 residues: MEEYKALLDEKMDRVLLSLDSEYKSLRTGRISSALFDKVLVDYYGEKTPLTRVANISIPEARLIVIQPWDKSLLSKIEQAILSSDLSMNPSSDGSVLRIKVPVLTVERRKEIVKQAKKIAEEYKVAARNVRQELNNKAKKQEKDSQITEDDLRRILDDIQRDTNSYIKKIDEIFDLKTKEIMEF.

It belongs to the RRF family.

The protein localises to the cytoplasm. Responsible for the release of ribosomes from messenger RNA at the termination of protein biosynthesis. May increase the efficiency of translation by recycling ribosomes from one round of translation to another. This is Ribosome-recycling factor from Borrelia hermsii (strain HS1 / DAH).